A 440-amino-acid polypeptide reads, in one-letter code: MGLPGSPWQWVLLLLGLLLPPATSFWLLNVLFPPHTTPKAELSNHTRPVILVPGCMGNRLEAKLDKPNVVNWLCYRKTEDFFTIWLDFNMFLPLGVDCWIDNTRVVYNRSSGHMSNAPGVQIRVPGFGKTYSVEYLDDNKLAGYLHTLVQNLVNNGYVRDETVRAAPYDWRLAPRQQDEYYQKLAGLVEEMYAAYGKPVFLIGHSLGCLHVLHFLLRQPQSWKDHFIDGFISLGAPWGGSIKPMRILASGDNQGIPIMSNIKLREEQRITTTSPWMFPAHHVWPEDHVFISTPNFNYTGQDFERFFADLHFEEGWHMFLQSRDLLAGLPAPGVEVYCLYGVGMPTAHTYIYDHNFPYKDPVAALYEDGDDTVATRSTELCGQWQGRQSQAVHLLPMNGTDHLNMVFSNKTLEHINAILLGAYRHGTPKSPTASLGPPTKE.

The signal sequence occupies residues 1-24; sequence MGLPGSPWQWVLLLLGLLLPPATS. N-linked (GlcNAc...) asparagine glycosylation is present at asparagine 44. Cysteine 74 and cysteine 98 are oxidised to a cystine. Residue asparagine 108 is glycosylated (N-linked (GlcNAc...) asparagine). The active-site Nucleophile is the serine 205. Asparagine 296 carries N-linked (GlcNAc...) asparagine glycosylation. A disulfide bridge links cysteine 337 with cysteine 380. Aspartate 369 (charge relay system) is an active-site residue. N-linked (GlcNAc...) asparagine glycosylation occurs at asparagine 397. The active-site Charge relay system is histidine 401. An N-linked (GlcNAc...) asparagine glycan is attached at asparagine 408.

This sequence belongs to the AB hydrolase superfamily. Lipase family. Detected in blood plasma (at protein level).

The protein resides in the secreted. It carries out the reaction a sterol + a 1,2-diacyl-sn-glycero-3-phosphocholine = a sterol ester + a 1-acyl-sn-glycero-3-phosphocholine. The enzyme catalyses a 1-O-alkyl-2-acetyl-sn-glycero-3-phosphocholine + H2O = a 1-O-alkyl-sn-glycero-3-phosphocholine + acetate + H(+). It catalyses the reaction 1-hexadecanoyl-2-(9Z,12Z-octadecadienoyl)-sn-glycero-3-phosphocholine + H2O = (9Z,12Z)-octadecadienoate + 1-hexadecanoyl-sn-glycero-3-phosphocholine + H(+). The catalysed reaction is 1-hexadecanoyl-2-(5Z,8Z,11Z,14Z-eicosatetraenoyl)-sn-glycero-3-phosphocholine + H2O = 1-hexadecanoyl-sn-glycero-3-phosphocholine + (5Z,8Z,11Z,14Z)-eicosatetraenoate + H(+). It carries out the reaction 1-hexadecanoyl-2-(5Z,8Z,11Z,14Z-eicosatetraenoyl)-sn-glycero-3-phosphocholine + cholesterol = cholesteryl (5Z,8Z,11Z,14Z)-eicosatetraenoate + 1-hexadecanoyl-sn-glycero-3-phosphocholine. The enzyme catalyses 1-hexadecanoyl-2-(9Z-octadecenoyl)-sn-glycero-3-phosphocholine + cholesterol = cholesteryl (9Z-octadecenoate) + 1-hexadecanoyl-sn-glycero-3-phosphocholine. It catalyses the reaction a 1-hexadecanoyl-2-acyl-sn-glycero-3-phosphocholine + (24S)-hydroxycholesterol = (24S)-24-hydroxycholesterol ester + 1-hexadecanoyl-sn-glycero-3-phosphocholine. The catalysed reaction is (24S)-hydroxycholesterol + 1-hexadecanoyl-2-(9Z,12Z-octadecadienoyl)-sn-glycero-3-phosphocholine = (24S)-hydroxycholesterol 3-linoleoate + 1-hexadecanoyl-sn-glycero-3-phosphocholine. It carries out the reaction 1-hexadecanoyl-2-(8Z,11Z,14Z-eicosatrienoyl)-sn-glycero-3-phosphocholine + cholesterol = cholesteryl (8Z,11Z,14Z)-eicosatrienoate + 1-hexadecanoyl-sn-glycero-3-phosphocholine. The enzyme catalyses 1-hexadecanoyl-2-(5Z,8Z,11Z-eicosatrienoyl)-sn-glycero-3-phosphocholine + cholesterol = cholesteryl (5Z,8Z,11Z)-eicosatrienoate + 1-hexadecanoyl-sn-glycero-3-phosphocholine. It catalyses the reaction 1-hexadecanoyl-2-(5Z,8Z,11Z,14Z,17Z-eicosapentaenoyl)-sn-glycero-3-phosphocholine + cholesterol = (5Z,8Z,11Z,14Z,17Z-eicosapentaenoyl)-cholesterol + 1-hexadecanoyl-sn-glycero-3-phosphocholine. The catalysed reaction is 1-hexadecanoyl-2-(9Z,12Z-octadecadienoyl)-sn-glycero-3-phosphocholine + cholesterol = cholesteryl (9Z,12Z)-octadecadienoate + 1-hexadecanoyl-sn-glycero-3-phosphocholine. It carries out the reaction 1-hexadecanoyl-2-(6Z,9Z,12Z-octadecatrienoyl)-sn-glycero-3-phosphocholine + cholesterol = (6Z,9Z,12Z-octadecatrienoyl)-cholesterol + 1-hexadecanoyl-sn-glycero-3-phosphocholine. The enzyme catalyses 1-hexadecanoyl-2-(11Z,14Z,17Z-eicosatrienoyl)-sn-glycero-3-phosphocholine + cholesterol = (11Z,14Z,17Z-eicosatrienoyl)-cholesterol + 1-hexadecanoyl-sn-glycero-3-phosphocholine. It catalyses the reaction 1-hexadecanoyl-2-(9Z,12Z,15Z-octadecatrienoyl)-sn-glycero-3-phosphocholine + cholesterol = (9Z,12Z,15Z-octadecatrienoyl)-cholesterol + 1-hexadecanoyl-sn-glycero-3-phosphocholine. The catalysed reaction is a 1-O-alkyl-2-acetyl-sn-glycero-3-phosphocholine + 1-hexadecanoyl-sn-glycero-3-phosphocholine = 1-hexadecanoyl-2-acetyl-sn-glycero-3-phosphocholine + a 1-O-alkyl-sn-glycero-3-phosphocholine. Central enzyme in the extracellular metabolism of plasma lipoproteins. Synthesized mainly in the liver and secreted into plasma where it converts cholesterol and phosphatidylcholines (lecithins) to cholesteryl esters and lysophosphatidylcholines on the surface of high and low density lipoproteins (HDLs and LDLs). The cholesterol ester is then transported back to the liver. Also produced in the brain by primary astrocytes, and esterifies free cholesterol on nascent APOE-containing lipoproteins secreted from glia and influences cerebral spinal fluid (CSF) APOE- and APOA1 levels. Together with APOE and the cholesterol transporter ABCA1, plays a key role in the maturation of glial-derived, nascent lipoproteins. Required for remodeling high-density lipoprotein particles into their spherical forms. Has a preference for plasma 16:0-18:2 or 18:O-18:2 phosphatidylcholines. Catalyzes the hydrolysis of 1-O-alkyl-2-acetyl-sn-glycero-3-phosphocholine (platelet-activating factor or PAF) to 1-O-alkyl-sn-glycero-3-phosphocholine (lyso-PAF). Also catalyzes the transfer of the acetate group from PAF to 1-hexadecanoyl-sn-glycero-3-phosphocholine forming lyso-PAF. Catalyzes the esterification of (24S)-hydroxycholesterol (24(S)OH-C), also known as cerebrosterol to produce 24(S)OH-C monoesters. This chain is Phosphatidylcholine-sterol acyltransferase (Lcat), found in Rattus norvegicus (Rat).